Reading from the N-terminus, the 360-residue chain is Photosystem II protein D1 (360 aa).

The next 3 helical transmembrane spans lie at 29–46 (YIGW…TATT), 118–133 (HFLL…EWEL), and 142–156 (WICV…AATA). Chlorophyll a is bound at residue histidine 118. A pheophytin a-binding site is contributed by tyrosine 126. [CaMn4O5] cluster-binding residues include aspartate 170 and glutamate 189. Residues 197 to 218 (FHMAGVAGVFGGALFSAMHGSL) traverse the membrane as a helical segment. Position 198 (histidine 198) interacts with chlorophyll a. A quinone is bound by residues histidine 215 and 264–265 (SF). Position 215 (histidine 215) interacts with Fe cation. A Fe cation-binding site is contributed by histidine 272. Residues 274 to 288 (FLGLWPVVGIWLTSI) form a helical membrane-spanning segment. The [CaMn4O5] cluster site is built by histidine 332, glutamate 333, aspartate 342, and alanine 344. Residues 345-360 (DNSLLPVASSSPSINS) constitute a propeptide that is removed on maturation.

Belongs to the reaction center PufL/M/PsbA/D family. In terms of assembly, PSII is composed of 1 copy each of membrane proteins PsbA, PsbB, PsbC, PsbD, PsbE, PsbF, PsbH, PsbI, PsbJ, PsbK, PsbL, PsbM, PsbT, PsbY, PsbZ, Psb30/Ycf12, at least 3 peripheral proteins of the oxygen-evolving complex and a large number of cofactors. It forms dimeric complexes. Requires The D1/D2 heterodimer binds P680, chlorophylls that are the primary electron donor of PSII, and subsequent electron acceptors. It shares a non-heme iron and each subunit binds pheophytin, quinone, additional chlorophylls, carotenoids and lipids. D1 provides most of the ligands for the Mn4-Ca-O5 cluster of the oxygen-evolving complex (OEC). There is also a Cl(-1) ion associated with D1 and D2, which is required for oxygen evolution. The PSII complex binds additional chlorophylls, carotenoids and specific lipids. as cofactor. In terms of processing, tyr-161 forms a radical intermediate that is referred to as redox-active TyrZ, YZ or Y-Z.

Its subcellular location is the plastid. The protein resides in the chloroplast thylakoid membrane. The enzyme catalyses 2 a plastoquinone + 4 hnu + 2 H2O = 2 a plastoquinol + O2. In terms of biological role, photosystem II (PSII) is a light-driven water:plastoquinone oxidoreductase that uses light energy to abstract electrons from H(2)O, generating O(2) and a proton gradient subsequently used for ATP formation. It consists of a core antenna complex that captures photons, and an electron transfer chain that converts photonic excitation into a charge separation. The D1/D2 (PsbA/PsbD) reaction center heterodimer binds P680, the primary electron donor of PSII as well as several subsequent electron acceptors. The polypeptide is Photosystem II protein D1 (Cyanidium caldarium (Red alga)).